Consider the following 103-residue polypeptide: Protein E7 (103 aa).

Residues 1-47 are E7 terminal domain; it reads MIGKEVTVQDIILELSEVQPEVLPVDLFCEEELPNEQETEEEPDIER. Residues 27-31 carry the LXCXE motif; interaction with host RB1 and TMEM173/STING motif; the sequence is LFCEE. A zinc finger lies at 56-94; that stretch reads CGCRHCEVKLRIFVHATEFGIRAFQQLLTGDLQLLCPDC. The Nuclear export signal motif lies at 76-84; the sequence is IRAFQQLLT.

The protein belongs to the papillomaviridae E7 protein family. In terms of assembly, homodimer. Homooligomer. Interacts with host RB1; this interaction induces dissociation of RB1-E2F1 complex thereby disrupting RB1 activity. Interacts with host EP300; this interaction represses EP300 transcriptional activity. Interacts with protein E2; this interaction inhibits E7 oncogenic activity. Interacts with host TMEM173/STING; this interaction impairs the ability of TMEM173/STING to sense cytosolic DNA and promote the production of type I interferon (IFN-alpha and IFN-beta). Highly phosphorylated.

It is found in the host cytoplasm. Its subcellular location is the host nucleus. Plays a role in viral genome replication by driving entry of quiescent cells into the cell cycle. Stimulation of progression from G1 to S phase allows the virus to efficiently use the cellular DNA replicating machinery to achieve viral genome replication. E7 protein has both transforming and trans-activating activities. Induces the disassembly of the E2F1 transcription factor from RB1, with subsequent transcriptional activation of E2F1-regulated S-phase genes. Interferes with host histone deacetylation mediated by HDAC1 and HDAC2, leading to transcription activation. Also plays a role in the inhibition of both antiviral and antiproliferative functions of host interferon alpha. Interaction with host TMEM173/STING impairs the ability of TMEM173/STING to sense cytosolic DNA and promote the production of type I interferon (IFN-alpha and IFN-beta). The chain is Protein E7 from Homo sapiens (Human).